The chain runs to 339 residues: UDP-N-acetylglucosamine/UDP-N-acetylgalactosamine transporter nstp-4 (339 aa).

A run of 8 helical transmembrane segments spans residues 44-64 (LSST…FFVI), 94-114 (LKVA…FFAL), 148-168 (YNWM…YPSG), 186-206 (ILGL…GVYF), 224-244 (LAFF…WQAI), 255-275 (GVIW…ALVV), 281-301 (ILKG…SWLV), and 305-325 (LTIT…TFLY).

Belongs to the nucleotide-sugar transporter family. SLC35A subfamily. Widely expressed, including in pharynx and pharyngeal gland cells, seam cells, spermatheca, stomatointestinal muscle, vulva, and body wall muscle.

The protein resides in the golgi apparatus membrane. Functionally, uridine diphosphate-N-acetylglucosamine (UDP-GlcNAc) transporter in the Golgi apparatus. UDP-N-acetylgalactosamine (UDP-GalNAc) transporter in the Golgi apparatus. Apparently transports UDP-GlcNAc and UDP-GalNAc simultaneously, and independently, by an unknown mechanism. Functions redundantly with nucleotide sugar transporter srf-3. May be involved in gonadal development. This Caenorhabditis elegans protein is UDP-N-acetylglucosamine/UDP-N-acetylgalactosamine transporter nstp-4.